Consider the following 389-residue polypeptide: Large envelope protein (389 aa).

Methionine 1 is subject to N-acetylmethionine. Glycine 2 carries the N-myristoyl glycine; by host lipid modification. A pre-S1 region spans residues 2 to 108 (GQNLSTSNPL…PPLRTTHPQA (107 aa)). Residues 2-163 (GQNLSTSNPL…FSRIGDPALN (162 aa)) are pre-S. Residues 2-170 (GQNLSTSNPL…ALNMENITSG (169 aa)) lie on the Virion surface; in external conformation side of the membrane. Residues 2–242 (GQNLSTSNPL…PGYRWMCLRR (241 aa)) lie on the Intravirion; in internal conformation side of the membrane. The tract at residues 76–102 (TLPANPPPASTNRQSGRQPTPLSPPLR) is disordered. Over residues 85–95 (STNRQSGRQPT) the composition is skewed to polar residues. A pre-S2 region spans residues 109–163 (MHWNSTTFHQTLQDPRVRGLYFPAGGSSSGTVNPVPTTTSPISSIFSRIGDPALN). A helical membrane pass occupies residues 171 to 191 (FLGPLLVLQAGFFLLTRILTI). The Intravirion; in external conformation segment spans residues 192-242 (PQSLDSWWTSLNFLGGTTVCLGQNSQSPISNHSPTSCPPTCPGYRWMCLRR). Residues 243–263 (FIIFLFILLLCLIFLLVLLDY) traverse the membrane as a helical segment. At 264-337 (QGMLPVCPLI…WASARFSWLS (74 aa)) the chain is on the virion surface side. The N-linked (GlcNAc...) asparagine; by host glycan is linked to asparagine 309. A helical transmembrane segment spans residues 338–358 (LLVPFVQWFVGLSPIVWLSVI). At 359–364 (WMMWYW) the chain is on the intravirion side. The helical transmembrane segment at 365–387 (GPSLYSILSPFLPLLPIFFCLWA) threads the bilayer. The Virion surface portion of the chain corresponds to 388-389 (YI).

It belongs to the orthohepadnavirus major surface antigen family. In its internal form (Li-HBsAg), interacts with the capsid protein and with the isoform S. Interacts with host chaperone CANX. As to quaternary structure, associates with host chaperone CANX through its pre-S2 N glycan; this association may be essential for isoform M proper secretion. In terms of assembly, interacts with isoform L. Interacts with the antigens of satellite virus HDV (HDVAgs); this interaction is required for encapsidation of HDV genomic RNA. Post-translationally, isoform M is N-terminally acetylated by host at a ratio of 90%, and N-glycosylated by host at the pre-S2 region. In terms of processing, myristoylated.

It localises to the virion membrane. Its function is as follows. The large envelope protein exists in two topological conformations, one which is termed 'external' or Le-HBsAg and the other 'internal' or Li-HBsAg. In its external conformation the protein attaches the virus to cell receptors and thereby initiating infection. This interaction determines the species specificity and liver tropism. This attachment induces virion internalization predominantly through caveolin-mediated endocytosis. The large envelope protein also assures fusion between virion membrane and endosomal membrane. In its internal conformation the protein plays a role in virion morphogenesis and mediates the contact with the nucleocapsid like a matrix protein. Functionally, the middle envelope protein plays an important role in the budding of the virion. It is involved in the induction of budding in a nucleocapsid independent way. In this process the majority of envelope proteins bud to form subviral lipoprotein particles of 22 nm of diameter that do not contain a nucleocapsid. The protein is Large envelope protein of Hepatitis B virus genotype D subtype adw (isolate United Kingdom/adyw/1979) (HBV-D).